The primary structure comprises 161 residues: Lipoprotein signal peptidase (161 aa).

The next 3 membrane-spanning stretches (helical) occupy residues 9 to 29 (WLWL…LVVE), 64 to 84 (WQKY…ANVL), and 96 to 113 (MAYA…IDRA). Catalysis depends on residues Asp-120 and Asp-138. Residues 133 to 153 (VFNIADVAIVMGAGLLILETF) traverse the membrane as a helical segment.

This sequence belongs to the peptidase A8 family.

The protein localises to the cell inner membrane. The enzyme catalyses Release of signal peptides from bacterial membrane prolipoproteins. Hydrolyzes -Xaa-Yaa-Zaa-|-(S,diacylglyceryl)Cys-, in which Xaa is hydrophobic (preferably Leu), and Yaa (Ala or Ser) and Zaa (Gly or Ala) have small, neutral side chains.. Its pathway is protein modification; lipoprotein biosynthesis (signal peptide cleavage). Functionally, this protein specifically catalyzes the removal of signal peptides from prolipoproteins. The protein is Lipoprotein signal peptidase of Haemophilus ducreyi (strain 35000HP / ATCC 700724).